The chain runs to 438 residues: 3-phosphoshikimate 1-carboxyvinyltransferase (438 aa).

Positions 21, 22, and 26 each coordinate 3-phosphoshikimate. K21 contacts phosphoenolpyruvate. Residues G95 and R123 each contribute to the phosphoenolpyruvate site. Residues S167, Q169, D315, and K342 each contribute to the 3-phosphoshikimate site. Residue Q169 coordinates phosphoenolpyruvate. D315 acts as the Proton acceptor in catalysis. Residues R346 and R387 each contribute to the phosphoenolpyruvate site.

It belongs to the EPSP synthase family. Monomer.

Its subcellular location is the cytoplasm. The enzyme catalyses 3-phosphoshikimate + phosphoenolpyruvate = 5-O-(1-carboxyvinyl)-3-phosphoshikimate + phosphate. The protein operates within metabolic intermediate biosynthesis; chorismate biosynthesis; chorismate from D-erythrose 4-phosphate and phosphoenolpyruvate: step 6/7. Its function is as follows. Catalyzes the transfer of the enolpyruvyl moiety of phosphoenolpyruvate (PEP) to the 5-hydroxyl of shikimate-3-phosphate (S3P) to produce enolpyruvyl shikimate-3-phosphate and inorganic phosphate. This is 3-phosphoshikimate 1-carboxyvinyltransferase from Coxiella burnetii (strain CbuK_Q154) (Coxiella burnetii (strain Q154)).